Consider the following 194-residue polypeptide: NADH-quinone oxidoreductase subunit B (194 aa).

The [4Fe-4S] cluster site is built by Cys73, Cys74, Cys138, and Cys168.

Belongs to the complex I 20 kDa subunit family. In terms of assembly, NDH-1 is composed of 14 different subunits. Subunits NuoB, C, D, E, F, and G constitute the peripheral sector of the complex. [4Fe-4S] cluster serves as cofactor.

The protein resides in the cell inner membrane. It carries out the reaction a quinone + NADH + 5 H(+)(in) = a quinol + NAD(+) + 4 H(+)(out). Its function is as follows. NDH-1 shuttles electrons from NADH, via FMN and iron-sulfur (Fe-S) centers, to quinones in the respiratory chain. The immediate electron acceptor for the enzyme in this species is believed to be ubiquinone. Couples the redox reaction to proton translocation (for every two electrons transferred, four hydrogen ions are translocated across the cytoplasmic membrane), and thus conserves the redox energy in a proton gradient. The polypeptide is NADH-quinone oxidoreductase subunit B (Rhizobium leguminosarum bv. trifolii (strain WSM2304)).